The primary structure comprises 907 residues: Gamma-tubulin complex component 3 (907 aa).

Ala2 carries the N-acetylalanine modification. Ser113 is modified (phosphoserine). The segment covering 210-230 (NQPSSQATTSKGVPSAVSRNM) has biased composition (polar residues). The disordered stretch occupies residues 210 to 241 (NQPSSQATTSKGVPSAVSRNMTRSRREGDTGG).

It belongs to the TUBGCP family. In terms of assembly, component of the gamma-tubulin ring complex (gTuRC) consisting of TUBGCP2, TUBGCP3, TUBGCP4, TUBGCP5 and TUBGCP6 and gamma-tubulin TUBG1 or TUBG2. TUBGCP2, TUBGCP3, TUBGCP4, TUBGCP5 and TUBGCP6 assemble in a 5:5:2:1:1 stoichiometry; each is associated with a gamma-tubulin, thereby arranging 14 gamma-tubulins in a helical manner. Gamma-tubulin at the first position is blocked by TUBGCP3 at the last position, allowing 13 protafilaments to grow into a microtubule. The gTuRC (via TUBGCP3 and TUBGCP6) interacts with ACTB and MZT1; the interactions form a luminal bridge that stabilizes the initial structure during complex assembly. The gTuRC (via TUBGCP2) interacts with MZT2A/MZT2B and CDK5RAP2 (via CM1 motif); the interactions play a role in gTuRC activation. Interacts with NIN (via N-terminus); the interaction may promote recruitment of the gamma-tubulin ring complex to the centrosome. Ubiquitously expressed.

It localises to the cytoplasm. It is found in the cytoskeleton. Its subcellular location is the microtubule organizing center. The protein localises to the centrosome. In terms of biological role, component of the gamma-tubulin ring complex (gTuRC) which mediates microtubule nucleation. The gTuRC regulates the minus-end nucleation of alpha-beta tubulin heterodimers that grow into microtubule protafilaments, a critical step in centrosome duplication and spindle formation. This Homo sapiens (Human) protein is Gamma-tubulin complex component 3 (TUBGCP3).